The sequence spans 326 residues: Balbiani ring protein 1 (326 aa).

Residues 1-33 (PSKSGPRPSKSGPRPSKSGPRPSKSGPRPSKSG) are compositionally biased toward low complexity. Residues 1–119 (PSKSGPRPSK…RESPVCDDAM (119 aa)) form a disordered region. Positions 34 to 51 (PRPEKCGSAMRKAEAEKC) are enriched in basic and acidic residues. Residues 93–102 (VTPTPEVPTT) show a composition bias toward low complexity. Over residues 107–119 (SESRESPVCDDAM) the composition is skewed to basic and acidic residues.

As to expression, salivary gland.

Its subcellular location is the secreted. Used by the larvae to construct a supramolecular structure, the larval tube. The chain is Balbiani ring protein 1 (BR1) from Chironomus pallidivittatus (Midge).